We begin with the raw amino-acid sequence, 154 residues long: Ribonuclease 1 (154 aa).

This sequence belongs to the BetVI family.

The protein resides in the cytoplasm. Its function is as follows. Catalyzes the two-stage endonucleolytic cleavage to 3'-phosphomononucleotides and 3'-phosphooligonucleotides with 2',3'-cyclic phosphate intermediates. In Panax ginseng (Korean ginseng), this protein is Ribonuclease 1.